A 268-amino-acid chain; its full sequence is Hydroxyethylthiazole kinase (268 aa).

A substrate-binding site is contributed by Met-45. Residues Arg-121 and Thr-167 each coordinate ATP. Gly-194 contacts substrate.

Belongs to the Thz kinase family. It depends on Mg(2+) as a cofactor.

The enzyme catalyses 5-(2-hydroxyethyl)-4-methylthiazole + ATP = 4-methyl-5-(2-phosphooxyethyl)-thiazole + ADP + H(+). Its pathway is cofactor biosynthesis; thiamine diphosphate biosynthesis; 4-methyl-5-(2-phosphoethyl)-thiazole from 5-(2-hydroxyethyl)-4-methylthiazole: step 1/1. In terms of biological role, catalyzes the phosphorylation of the hydroxyl group of 4-methyl-5-beta-hydroxyethylthiazole (THZ). In Bacillus cereus (strain ATCC 10987 / NRS 248), this protein is Hydroxyethylthiazole kinase.